A 379-amino-acid chain; its full sequence is RING finger protein 215 (379 aa).

Disordered regions lie at residues 1–21 (MGSADRPALRSPSLPPPPPSP) and 44–63 (AADGSEPATGEGRGGARSVR). Topologically, residues 1–24 (MGSADRPALRSPSLPPPPPSPPSP) are cytoplasmic. A helical transmembrane segment spans residues 25 to 45 (LLLLLPLLPLWLGLMGPGAAA). Residues 46-252 (DGSEPATGEG…GGAQAQEQKP (207 aa)) are Extracellular-facing. N-linked (GlcNAc...) asparagine glycosylation is present at N188. The chain crosses the membrane as a helical span at residues 253-273 (LQQLWNAILLVAMLLCTGLVV). At 274-379 (QAQRQASRQN…NVLGNHYSDD (106 aa)) the chain is on the cytoplasmic side. An RING-type; atypical zinc finger spans residues 327–368 (CAVCLDYFCNKQWLRVLPCKHEFHRDCVDPWLMLQQTCPLCK).

The protein resides in the membrane. The protein is RING finger protein 215 (Rnf215) of Mus musculus (Mouse).